Here is a 748-residue protein sequence, read N- to C-terminus: Signal transducer and activator of transcription 4 (748 aa).

The 96-residue stretch at 569-664 folds into the SH2 domain; sequence WIDGYVMGFV…ENPLKYLYPD (96 aa). K667 carries the post-translational modification N6-acetyllysine. A Phosphotyrosine; by JAK modification is found at Y693. S721 is modified (phosphoserine; by MAP2K6).

Belongs to the transcription factor STAT family. Forms a homodimer or a heterodimer with a related family member. Interacts with ARL2BP. The SH2 domain interacts, in vitro, with IL12RB2 via a short cytoplasmic domain. Interacts with STAT1. Interacts with JUN; this complex efficiently interacts with the AP-1-related sequence of the IFN-gamma. In terms of processing, acetylation at Lys-667 is required for JAK2-mediated phosphorylation and activation of STAT4. Post-translationally, tyrosine phosphorylated upon IL12 and IFN-alpha activation, but not by IFN-gamma in T-lymphocytes and NK cells. Serine phosphorylation is required for maximal transcriptional activity but not for DNA binding. Phosphorylation by MAP2K6 at Ser-721 is required for full transcriptional activity induced by IL12. However this serine phosphorylation is not required for cell proliferation although critical for IFN-gamma production.

It localises to the cytoplasm. The protein localises to the nucleus. Transcriptional regulator mainly expressed in hematopoietic cells that plays a critical role in cellular growth, differentiation and immune response. Plays a key role in the differentiation of T-helper 1 cells and the production of interferon-gamma. Also participates in multiple neutrophil functions including chemotaxis and production of the neutrophil extracellular traps. After IL12 binding to its receptor IL12RB2, STAT4 interacts with the intracellular domain of IL12RB2 and becomes tyrosine phosphorylated. Phosphorylated STAT4 then homodimerizes and migrates to the nucleus where it can recognize STAT target sequences present in IL12 responsive genes. Although IL12 appears to be the predominant activating signal, STAT4 can also be phosphorylated and activated in response to IFN-gamma stimulation via JAK1 and TYK2 and in response to different interleukins including IL23, IL2 and IL35. Transcription activation of IFN-gamma gene is mediated by interaction with JUN that forms a complex that efficiently interacts with the AP-1-related sequence of the IFN-gamma promoter. In response to IFN-alpha/beta signaling, acts as a transcriptional repressor and suppresses IL5 and IL13 mRNA expression during response to T-cell receptor (TCR) activation. The protein is Signal transducer and activator of transcription 4 (STAT4) of Homo sapiens (Human).